A 283-amino-acid polypeptide reads, in one-letter code: Protein/nucleic acid deglycase HchA (283 aa).

Zn(2+) is bound by residues H86, E91, and H123. The active-site Nucleophile is the C185.

It belongs to the peptidase C56 family. HchA subfamily. As to quaternary structure, homodimer.

It localises to the cytoplasm. The enzyme catalyses N(omega)-(1-hydroxy-2-oxopropyl)-L-arginyl-[protein] + H2O = lactate + L-arginyl-[protein] + H(+). The catalysed reaction is N(6)-(1-hydroxy-2-oxopropyl)-L-lysyl-[protein] + H2O = lactate + L-lysyl-[protein] + H(+). It catalyses the reaction S-(1-hydroxy-2-oxopropyl)-L-cysteinyl-[protein] + H2O = lactate + L-cysteinyl-[protein] + H(+). It carries out the reaction N(omega)-(1-hydroxy-2-oxoethyl)-L-arginyl-[protein] + H2O = L-arginyl-[protein] + glycolate + H(+). The enzyme catalyses N(6)-(1-hydroxy-2-oxoethyl)-L-lysyl-[protein] + H2O = glycolate + L-lysyl-[protein] + H(+). The catalysed reaction is S-(1-hydroxy-2-oxoethyl)-L-cysteinyl-[protein] + H2O = glycolate + L-cysteinyl-[protein] + H(+). It catalyses the reaction N(2)-(1-hydroxy-2-oxopropyl)-dGTP + H2O = lactate + dGTP + H(+). It carries out the reaction N(2)-(1-hydroxy-2-oxopropyl)-GTP + H2O = lactate + GTP + H(+). The enzyme catalyses N(2)-(1-hydroxy-2-oxopropyl)-GDP + H2O = lactate + GDP + H(+). The catalysed reaction is N(2)-(1-hydroxy-2-oxopropyl)-GMP + H2O = lactate + GMP + H(+). It catalyses the reaction N(2)-(1-hydroxy-2-oxoethyl)-dGTP + H2O = dGTP + glycolate + H(+). It carries out the reaction N(2)-(1-hydroxy-2-oxoethyl)-GTP + H2O = glycolate + GTP + H(+). The enzyme catalyses N(2)-(1-hydroxy-2-oxoethyl)-GDP + H2O = glycolate + GDP + H(+). The catalysed reaction is N(2)-(1-hydroxy-2-oxoethyl)-GMP + H2O = glycolate + GMP + H(+). It catalyses the reaction an N(2)-(1-hydroxy-2-oxopropyl)-guanosine in RNA + H2O = a guanosine in RNA + lactate + H(+). It carries out the reaction an N(2)-(1-hydroxy-2-oxopropyl)-2'-deoxyguanosine in DNA + H2O = a 2'-deoxyguanosine in DNA + lactate + H(+). The enzyme catalyses an N(2)-(1-hydroxy-2-oxoethyl)-guanosine in RNA + H2O = a guanosine in RNA + glycolate + H(+). The catalysed reaction is an N(2)-(1-hydroxy-2-oxoethyl)-2'-deoxyguanosine in DNA + H2O = a 2'-deoxyguanosine in DNA + glycolate + H(+). Its function is as follows. Protein and nucleotide deglycase that catalyzes the deglycation of the Maillard adducts formed between amino groups of proteins or nucleotides and reactive carbonyl groups of glyoxals. Thus, functions as a protein deglycase that repairs methylglyoxal- and glyoxal-glycated proteins, and releases repaired proteins and lactate or glycolate, respectively. Deglycates cysteine, arginine and lysine residues in proteins, and thus reactivates these proteins by reversing glycation by glyoxals. Acts on early glycation intermediates (hemithioacetals and aminocarbinols), preventing the formation of Schiff bases and advanced glycation endproducts (AGE). Also functions as a nucleotide deglycase able to repair glycated guanine in the free nucleotide pool (GTP, GDP, GMP, dGTP) and in DNA and RNA. Is thus involved in a major nucleotide repair system named guanine glycation repair (GG repair), dedicated to reversing methylglyoxal and glyoxal damage via nucleotide sanitization and direct nucleic acid repair. Plays an important role in protecting cells from carbonyl stress. This Escherichia coli (strain 55989 / EAEC) protein is Protein/nucleic acid deglycase HchA.